A 231-amino-acid polypeptide reads, in one-letter code: Red fluorescent protein eqFP611 (231 aa).

Residues 63–65 (MYG) constitute a cross-link (2-iminomethyl-5-imidazolinone (Met-Gly)). Y64 is modified ((E)-2,3-didehydrotyrosine).

The protein belongs to the GFP family. As to quaternary structure, monomer. In terms of processing, contains a chromophore consisting of modified amino acid residues. The chromophore is formed by autocatalytic backbone condensation between Xaa-N and Gly-(N+2), oxidation of Tyr-(N+1) to didehydrotyrosine, and formation of a double bond to the alpha-amino nitrogen of residue Xaa-N. Maturation of the chromophore requires nothing other than molecular oxygen.

In terms of biological role, pigment protein. In Entacmaea quadricolor (Bubble-tip anemone), this protein is Red fluorescent protein eqFP611.